Consider the following 221-residue polypeptide: Probable septum site-determining protein MinC (221 aa).

It belongs to the MinC family. In terms of assembly, interacts with MinD and FtsZ.

Its function is as follows. Cell division inhibitor that blocks the formation of polar Z ring septums. Rapidly oscillates between the poles of the cell to destabilize FtsZ filaments that have formed before they mature into polar Z rings. Prevents FtsZ polymerization. In Shewanella sp. (strain MR-7), this protein is Probable septum site-determining protein MinC.